A 76-amino-acid chain; its full sequence is Small ribosomal subunit protein bS18 (76 aa).

It belongs to the bacterial ribosomal protein bS18 family. Part of the 30S ribosomal subunit. Forms a tight heterodimer with protein bS6.

Binds as a heterodimer with protein bS6 to the central domain of the 16S rRNA, where it helps stabilize the platform of the 30S subunit. This is Small ribosomal subunit protein bS18 from Aeromonas salmonicida (strain A449).